Here is a 100-residue protein sequence, read N- to C-terminus: Urease subunit gamma 1 (100 aa).

The protein belongs to the urease gamma subunit family. In terms of assembly, heterotrimer of UreA (gamma), UreB (beta) and UreC (alpha) subunits. Three heterotrimers associate to form the active enzyme.

It localises to the cytoplasm. It carries out the reaction urea + 2 H2O + H(+) = hydrogencarbonate + 2 NH4(+). The protein operates within nitrogen metabolism; urea degradation; CO(2) and NH(3) from urea (urease route): step 1/1. Functionally, disruption of the ure1 gene cluster suggests that it protects brucellae during their passage through the stomach. The major route of infection in human brucellosis is oral. This is Urease subunit gamma 1 from Brucella abortus (strain 2308).